Here is a 678-residue protein sequence, read N- to C-terminus: UvrABC system protein B (678 aa).

The region spanning 26-185 is the Helicase ATP-binding domain; that stretch reads EGLEDGEAFQ…LTTMQYTRND (160 aa). Residue 39–46 participates in ATP binding; sequence GVTGSGKT. Positions 92–115 match the Beta-hairpin motif; the sequence is YYDYYQPEAYVPASDTYIAKDSSV. One can recognise a Helicase C-terminal domain in the interval 430 to 596; that stretch reads QVDDLLGEIR…KLNKKITDIL (167 aa). A disordered region spans residues 597 to 630; it reads EDSPYAPKPGASAAKLKAAEADGEYSPQEMQRMT. In terms of domain architecture, UVR spans 635-670; that stretch reads ASEIKRMEKQMYQAAKDLDFELAAKLRDDLKRLKSS.

It belongs to the UvrB family. Forms a heterotetramer with UvrA during the search for lesions. Interacts with UvrC in an incision complex.

It is found in the cytoplasm. In terms of biological role, the UvrABC repair system catalyzes the recognition and processing of DNA lesions. A damage recognition complex composed of 2 UvrA and 2 UvrB subunits scans DNA for abnormalities. Upon binding of the UvrA(2)B(2) complex to a putative damaged site, the DNA wraps around one UvrB monomer. DNA wrap is dependent on ATP binding by UvrB and probably causes local melting of the DNA helix, facilitating insertion of UvrB beta-hairpin between the DNA strands. Then UvrB probes one DNA strand for the presence of a lesion. If a lesion is found the UvrA subunits dissociate and the UvrB-DNA preincision complex is formed. This complex is subsequently bound by UvrC and the second UvrB is released. If no lesion is found, the DNA wraps around the other UvrB subunit that will check the other stand for damage. This Hydrogenovibrio crunogenus (strain DSM 25203 / XCL-2) (Thiomicrospira crunogena) protein is UvrABC system protein B.